Consider the following 934-residue polypeptide: DNA topoisomerase 1 (934 aa).

The segment at 1 to 20 is disordered; that stretch reads MADPKTKGRGSGGNGSGRRL. The region spanning 18-142 is the Toprim domain; that stretch reads RRLVIVESPT…VKRMVFHEIT (125 aa). Mg(2+) is bound by residues Glu-24 and Asp-111. The Topo IA-type catalytic domain maps to 157-616; sequence DIDLVDAQET…FYFGGDHGVP (460 aa). The interaction with DNA stretch occupies residues 191 to 196; sequence SAGRVQ. Tyr-342 acts as the O-(5'-phospho-DNA)-tyrosine intermediate in catalysis. Disordered regions lie at residues 746 to 765, 842 to 892, and 905 to 934; these read AAQG…RTGS, KRRG…KGDD, and LADR…AKRD. Residues 911 to 934 show a composition bias toward basic residues; it reads RGPAKRPARKAARKVPAKKAAKRD.

Belongs to the type IA topoisomerase family. As to quaternary structure, monomer. Mg(2+) is required as a cofactor.

The catalysed reaction is ATP-independent breakage of single-stranded DNA, followed by passage and rejoining.. Releases the supercoiling and torsional tension of DNA, which is introduced during the DNA replication and transcription, by transiently cleaving and rejoining one strand of the DNA duplex. Introduces a single-strand break via transesterification at a target site in duplex DNA. The scissile phosphodiester is attacked by the catalytic tyrosine of the enzyme, resulting in the formation of a DNA-(5'-phosphotyrosyl)-enzyme intermediate and the expulsion of a 3'-OH DNA strand. The free DNA strand then undergoes passage around the unbroken strand, thus removing DNA supercoils. Finally, in the religation step, the DNA 3'-OH attacks the covalent intermediate to expel the active-site tyrosine and restore the DNA phosphodiester backbone. This Mycobacterium bovis (strain ATCC BAA-935 / AF2122/97) protein is DNA topoisomerase 1.